The sequence spans 219 residues: Translation initiation factor 6 (219 aa).

This sequence belongs to the eIF-6 family.

Functionally, binds to the 50S ribosomal subunit and prevents its association with the 30S ribosomal subunit to form the 70S initiation complex. The chain is Translation initiation factor 6 from Methanosarcina mazei (strain ATCC BAA-159 / DSM 3647 / Goe1 / Go1 / JCM 11833 / OCM 88) (Methanosarcina frisia).